The primary structure comprises 225 residues: tRNA (guanine-N(1)-)-methyltransferase (225 aa).

S-adenosyl-L-methionine is bound by residues G112 and 132–137 (IGDYVL).

Belongs to the RNA methyltransferase TrmD family. In terms of assembly, homodimer.

Its subcellular location is the cytoplasm. It catalyses the reaction guanosine(37) in tRNA + S-adenosyl-L-methionine = N(1)-methylguanosine(37) in tRNA + S-adenosyl-L-homocysteine + H(+). Specifically methylates guanosine-37 in various tRNAs. In Bacteroides fragilis (strain ATCC 25285 / DSM 2151 / CCUG 4856 / JCM 11019 / LMG 10263 / NCTC 9343 / Onslow / VPI 2553 / EN-2), this protein is tRNA (guanine-N(1)-)-methyltransferase.